The sequence spans 456 residues: uncharacterized protein (456 aa).

One can recognise a TRAM domain in the interval 5–63 (LVKKGQQISLKIKRLGINGEGIGYYKKLIIFVPGALPKEEVTATITNVTPKFAEGTLQS). [4Fe-4S] cluster-binding residues include Cys-76, Cys-82, Cys-85, and Cys-165. Residues Gln-289, Tyr-318, Asp-339, and Asp-387 each coordinate S-adenosyl-L-methionine. Residue Cys-414 is the Nucleophile of the active site.

It belongs to the class I-like SAM-binding methyltransferase superfamily. RNA M5U methyltransferase family.

This is an uncharacterized protein from Enterococcus faecalis (strain ATCC 700802 / V583).